A 97-amino-acid chain; its full sequence is Cystatin-A (97 aa).

At Met-1 the chain carries N-acetylmethionine. A Secondary area of contact motif is present at residues 46 to 50; the sequence is QVVAG.

Belongs to the cystatin family.

It is found in the cytoplasm. In terms of biological role, this is an intracellular thiol proteinase inhibitor. This chain is Cystatin-A (Csta), found in Mus musculus (Mouse).